We begin with the raw amino-acid sequence, 332 residues long: Decaprenyl-phosphate phosphoribosyltransferase (332 aa).

Positions 1–12 are enriched in basic and acidic residues; it reads MSEHAAEHHRDT. The disordered stretch occupies residues 1–36; it reads MSEHAAEHHRDTQNFLTSEPHTTAIEDNKKRQPPKN. A run of 2 helical transmembrane segments spans residues 50–70 and 74–94; these read WVKNVLVLAAPLAAGADAIFN and IIDVAIAFVVFCFGASAIYLV. 5-phospho-alpha-D-ribose 1-diphosphate is bound by residues K52 and Y92. Mg(2+) is bound by residues N95 and D99. K109 contributes to the 5-phospho-alpha-D-ribose 1-diphosphate binding site. Helical transmembrane passes span 114-134 and 146-166; these read IAAGVLPVGMAYGMAVALIAL and VALACVIGVYIALQLGYCFGW. 5-phospho-alpha-D-ribose 1-diphosphate is bound by residues K167 and R184. 2 helical membrane passes run 169 to 189 and 190 to 210; these read MPVIDIALVSSGFMLRAMAGG and VAAGIELSQWFLLVAAFGSLF. K215 is a trans,octa-cis-decaprenyl phosphate binding site. 3 helical membrane-spanning segments follow: residues 244 to 264, 273 to 293, and 310 to 330; these read FVWTMAATAVVMSYALWGFDL, PWYQISMVPFTIAILRYAAGV, and VLQVLALAWVFCIVMAVYIMP.

The protein belongs to the UbiA prenyltransferase family. DPPR synthase subfamily. It depends on Mg(2+) as a cofactor.

It is found in the cell inner membrane. It catalyses the reaction trans,octa-cis-decaprenyl phosphate + 5-phospho-alpha-D-ribose 1-diphosphate + H(+) = trans,octa-cis-decaprenylphospho-beta-D-ribofuranose 5-phosphate + diphosphate. It functions in the pathway cell wall biogenesis; cell wall polysaccharide biosynthesis. Its function is as follows. Involved in the biosynthesis of decaprenylphosphoryl arabinose (DPA) a precursor for arabinan synthesis in mycobacterial cell wall biosynthesis. Catalyzes the transfer of a 5-phosphoribosyl residue from phosphoribose diphosphate (PRPP) to decaprenyl phosphate (DP) to form decaprenylphosphoryl-5-phosphoribose (DPPR). In Corynebacterium glutamicum (strain ATCC 13032 / DSM 20300 / JCM 1318 / BCRC 11384 / CCUG 27702 / LMG 3730 / NBRC 12168 / NCIMB 10025 / NRRL B-2784 / 534), this protein is Decaprenyl-phosphate phosphoribosyltransferase.